The sequence spans 489 residues: NAC domain-containing protein 74 (489 aa).

Residues 9–159 (LPPGFGFHPK…AYVLCRITKR (151 aa)) enclose the NAC domain. The DNA-binding element occupies 108–165 (IGTKKTLVFHEGRPPTGRRTEWIMHEYYIDERECQACPDMKDAYVLCRITKRNDWIPG). Over residues 413–427 (KNQAHDVASTKRSDA) the composition is skewed to basic and acidic residues. The tract at residues 413–435 (KNQAHDVASTKRSDAGKPSTELS) is disordered. The chain crosses the membrane as a helical span at residues 456–476 (WNMILVAGFAIGVAVVALHIG).

In terms of tissue distribution, widely expressed.

It localises to the nucleus. The protein localises to the cell membrane. In terms of biological role, transcription activator involved in heat and endoplasmic reticulum (ER) stress responses. Regulates the expression of genes involved in ER protein folding and heat stress-responsive genes. Binds directly to the promoter of BZIP74 and regulates its expression in response to heat stress. This is NAC domain-containing protein 74 from Oryza sativa subsp. japonica (Rice).